Consider the following 400-residue polypeptide: Homoserine O-acetyltransferase (400 aa).

Residues 1-11 (MVKVQSIQSQA) show a composition bias toward polar residues. The segment at 1–24 (MVKVQSIQSQAVHAEERAHEADHP) is disordered. Over residues 13–23 (HAEERAHEADH) the composition is skewed to basic and acidic residues. Positions 64–373 (NAILVCHALT…TDRGHDAFLL (310 aa)) constitute an AB hydrolase-1 domain. S169 functions as the Nucleophile in the catalytic mechanism. Residue R239 coordinates substrate. Active-site residues include D335 and H368. D369 serves as a coordination point for substrate.

It belongs to the AB hydrolase superfamily. MetX family. As to quaternary structure, homodimer.

The protein localises to the cytoplasm. The catalysed reaction is L-homoserine + acetyl-CoA = O-acetyl-L-homoserine + CoA. The protein operates within amino-acid biosynthesis; L-methionine biosynthesis via de novo pathway; O-acetyl-L-homoserine from L-homoserine: step 1/1. Transfers an acetyl group from acetyl-CoA to L-homoserine, forming acetyl-L-homoserine. The protein is Homoserine O-acetyltransferase of Rhodopseudomonas palustris (strain BisB18).